The chain runs to 118 residues: Peptidyl-prolyl cis-trans isomerase Pin1 (118 aa).

Disordered stretches follow at residues 1–37 and 61–84; these read MSSEKVRASHILIKHQGSRRKSSWKDPDGSLISATTR and LASRHSHCSSAKRGGDLGPFGRGQ. In terms of domain architecture, PpiC spans 3–118; it reads SEKVRASHIL…SGVHIIKRTG (116 aa). Residues 12 to 22 are compositionally biased toward basic residues; that stretch reads LIKHQGSRRKS.

It belongs to the PpiC/parvulin rotamase family. Post-translationally, the N-terminus is blocked. Expressed in roots, stems, leaves, flowers and seedlings.

It is found in the cytoplasm. Its subcellular location is the nucleus. It carries out the reaction [protein]-peptidylproline (omega=180) = [protein]-peptidylproline (omega=0). Inhibited in vitro by juglone. Its function is as follows. Prolyl cis/trans isomerase with specificity for phospho-Ser-Pro bonds. This Digitalis lanata (Grecian foxglove) protein is Peptidyl-prolyl cis-trans isomerase Pin1 (PARV12.8).